The chain runs to 37 residues: Large ribosomal subunit protein bL36 (37 aa).

This sequence belongs to the bacterial ribosomal protein bL36 family.

The sequence is that of Large ribosomal subunit protein bL36 from Parasynechococcus marenigrum (strain WH8102).